Reading from the N-terminus, the 156-residue chain is MSNNALDRLINKQKPKVPPRNDVVSESVSNDIKTQGQQELNTSLPPSDTKATPEEMPTSHESETSLSQDQKPKLSPDTFETVRNTIRIESEVDESLRQLCHEERITKETWLEAAYLYLCEKPEELAQVIQLAQERLSQRKAIADYKRAKTMQERFL.

Positions 1 to 55 (MSNNALDRLINKQKPKVPPRNDVVSESVSNDIKTQGQQELNTSLPPSDTKATPEE) are required for interaction with McdA:DNA complex. The disordered stretch occupies residues 1–79 (MSNNALDRLI…QKPKLSPDTF (79 aa)). Residues 24-50 (VSESVSNDIKTQGQQELNTSLPPSDTK) show a composition bias toward polar residues. Over residues 51–63 (ATPEEMPTSHESE) the composition is skewed to basic and acidic residues. The stretch at 122–156 (PEELAQVIQLAQERLSQRKAIADYKRAKTMQERFL) forms a coiled coil.

Homodimerizes; may exist in higher order oligomers in solution. Forms a complex with McdA:DNA. Homohexamerizes, interacts with shell components of the carboxysome.

The protein localises to the carboxysome. McdA and McdB together mediate carboxysome (Cb) spacing, size, ultrastructure and probably inheritance in the cell, together they prevent Cb aggregation. McdA is an ATPase that forms dynamic gradients on the nucleoid in response to adapter protein McdB, which associates with carboxysomes. The interplay between McdA gradients on the nucleoid and McdB-bound carboxysomes result in the equal spacing of Cbs along the cell length. Stimulates the ATPase activity of McdA, causing McdA to be released from DNA. Undergoes liquid-liquid phase separation. In terms of biological role, incorrect positioning (aggregation) of carboxysomes results in reduced CO(2) fixation by encapsulated ribulose-1,5-bisphosphate carboxylase (RuBisCO, cbbL/cbbS), which leads to slower growth. In Gloeothece citriformis (strain PCC 7424) (Cyanothece sp. (strain PCC 7424)), this protein is Maintenance of carboxysome distribution protein B.